The chain runs to 374 residues: Biotin synthase (374 aa).

In terms of domain architecture, Radical SAM core spans 51–278 (NTVKVNYLVN…DTEIRIAGGR (228 aa)). Positions 66, 70, and 73 each coordinate [4Fe-4S] cluster. [2Fe-2S] cluster is bound by residues Cys-110, Cys-143, Cys-203, and Arg-273. Positions 346 to 374 (IAGGTSVAGSAPDPAIRRRGAGTDVPANA) are disordered.

This sequence belongs to the radical SAM superfamily. Biotin synthase family. In terms of assembly, homodimer. It depends on [4Fe-4S] cluster as a cofactor. The cofactor is [2Fe-2S] cluster.

The enzyme catalyses (4R,5S)-dethiobiotin + (sulfur carrier)-SH + 2 reduced [2Fe-2S]-[ferredoxin] + 2 S-adenosyl-L-methionine = (sulfur carrier)-H + biotin + 2 5'-deoxyadenosine + 2 L-methionine + 2 oxidized [2Fe-2S]-[ferredoxin]. Its pathway is cofactor biosynthesis; biotin biosynthesis; biotin from 7,8-diaminononanoate: step 2/2. Functionally, catalyzes the conversion of dethiobiotin (DTB) to biotin by the insertion of a sulfur atom into dethiobiotin via a radical-based mechanism. In Nocardioides sp. (strain ATCC BAA-499 / JS614), this protein is Biotin synthase.